Consider the following 214-residue polypeptide: Probable nicotinate-nucleotide adenylyltransferase (214 aa).

The protein belongs to the NadD family.

It catalyses the reaction nicotinate beta-D-ribonucleotide + ATP + H(+) = deamido-NAD(+) + diphosphate. Its pathway is cofactor biosynthesis; NAD(+) biosynthesis; deamido-NAD(+) from nicotinate D-ribonucleotide: step 1/1. Its function is as follows. Catalyzes the reversible adenylation of nicotinate mononucleotide (NaMN) to nicotinic acid adenine dinucleotide (NaAD). This Rhodopirellula baltica (strain DSM 10527 / NCIMB 13988 / SH1) protein is Probable nicotinate-nucleotide adenylyltransferase.